Reading from the N-terminus, the 278-residue chain is Dehydrogenase/reductase SDR family member 4 (278 aa).

Residue 36–60 (LVTASTDGIGFAIARRLAQDGAHVV) participates in NADP(+) binding. An N6-acetyllysine; alternate modification is found at K92. An N6-succinyllysine; alternate modification is found at K92. K105 is subject to N6-acetyllysine. S169 provides a ligand contact to substrate. Y182 (proton acceptor) is an active-site residue. Residue K186 coordinates NADP(+). K216 is subject to N6-acetyllysine; alternate. Residue K216 is modified to N6-succinyllysine; alternate. Residue S220 is modified to Phosphoserine. K227 and K234 each carry N6-succinyllysine. The short motif at 276-278 (SRL) is the Peroxisomal targeting signal element.

This sequence belongs to the short-chain dehydrogenases/reductases (SDR) family. As to quaternary structure, homotetramer.

Its subcellular location is the peroxisome. The enzyme catalyses a secondary alcohol + NADP(+) = a ketone + NADPH + H(+). It carries out the reaction 3beta-hydroxy-5beta-pregnane-20-one + NADP(+) = 5beta-pregnan-3,20-dione + NADPH + H(+). The catalysed reaction is 5beta-dihydrotestosterone + NADPH + H(+) = 5beta-androstane-3beta,17beta-diol + NADP(+). It catalyses the reaction 5beta-androstane-3,17-dione + NADPH + H(+) = 3beta-hydroxy-5beta-androstane-17-one + NADP(+). The enzyme catalyses isatin + NADPH + H(+) = 3-hydroxyindolin-2-one + NADP(+). It carries out the reaction lithocholate + NADP(+) = 3-oxo-5beta-cholan-24-oate + NADPH + H(+). The catalysed reaction is 3-oxo-5beta-cholan-24-oate + NADPH + H(+) = isolithocholate + NADP(+). Functionally, NADPH-dependent oxidoreductase which catalyzes the reduction of a variety of compounds bearing carbonyl groups including ketosteroids, alpha-dicarbonyl compounds, aldehydes, aromatic ketones and quinones. Reduces 3-ketosteroids and benzil into 3beta-hydroxysteroids and R-benzoin, respectively, in contrast to the stereoselectivity of non-primate DHRS4s which produce 3alpha-hydroxysteroids and S-benzoin. Diplays low activity toward all-trans-retinal and no activity toward 9-cis-retinal as compared to non-primate mammals. In the reverse reaction, catalyze the NAD-dependent oxidation of 3beta-hydroxysteroids and alcohol, but with much lower efficiency. Involved in the metabolism of 3beta-hydroxysteroids, isatin and xenobiotic carbonyl compounds. The protein is Dehydrogenase/reductase SDR family member 4 (DHRS4) of Pongo abelii (Sumatran orangutan).